A 315-amino-acid chain; its full sequence is Methionyl-tRNA formyltransferase (315 aa).

113 to 116 (SLLP) is a (6S)-5,6,7,8-tetrahydrofolate binding site.

It belongs to the Fmt family.

The catalysed reaction is L-methionyl-tRNA(fMet) + (6R)-10-formyltetrahydrofolate = N-formyl-L-methionyl-tRNA(fMet) + (6S)-5,6,7,8-tetrahydrofolate + H(+). Attaches a formyl group to the free amino group of methionyl-tRNA(fMet). The formyl group appears to play a dual role in the initiator identity of N-formylmethionyl-tRNA by promoting its recognition by IF2 and preventing the misappropriation of this tRNA by the elongation apparatus. The sequence is that of Methionyl-tRNA formyltransferase from Klebsiella pneumoniae subsp. pneumoniae (strain ATCC 700721 / MGH 78578).